We begin with the raw amino-acid sequence, 127 residues long: MALLSAMKGKLISVIGDEDTCVGFLLGGVGEINKNRHPNFMVVDKNTAVSEIEDCFKRFIKRDDIDIILINQNYAELIRHVIDSHTAPTPAVLEIPSKDHPYDASKDSILRRAKGMFNPEDMIANRG.

This sequence belongs to the V-ATPase F subunit family. As to quaternary structure, V-ATPase is a heteromultimeric enzyme made up of two complexes: the ATP-hydrolytic V1 complex and the proton translocation V0 complex. The V1 complex consists of three catalytic AB heterodimers that form a heterohexamer, three peripheral stalks each consisting of EG heterodimers, one central rotor including subunits D and F, and the regulatory subunits C and H. The proton translocation complex V0 consists of the proton transport subunit a, a ring of proteolipid subunits c9c'', rotary subunit d, subunits e and f, and the accessory subunits VhaAC45 and ATP6AP2.

In terms of biological role, subunit of the V1 complex of vacuolar(H+)-ATPase (V-ATPase), a multisubunit enzyme composed of a peripheral complex (V1) that hydrolyzes ATP and a membrane integral complex (V0) that translocates protons. V-ATPase is responsible for acidifying and maintaining the pH of intracellular compartments and in some cell types, is targeted to the plasma membrane, where it is responsible for acidifying the extracellular environment. The chain is V-type proton ATPase subunit F (Vha14) from Anopheles gambiae (African malaria mosquito).